A 177-amino-acid chain; its full sequence is Large ribosomal subunit protein bL9 (177 aa).

The tract at residues 151–177 (VEEEPAEEVEAPAETEVAEDAEEATEA) is disordered.

It belongs to the bacterial ribosomal protein bL9 family.

Functionally, binds to the 23S rRNA. The sequence is that of Large ribosomal subunit protein bL9 from Maridesulfovibrio salexigens (strain ATCC 14822 / DSM 2638 / NCIMB 8403 / VKM B-1763) (Desulfovibrio salexigens).